Here is a 677-residue protein sequence, read N- to C-terminus: MTIRHQGQQYRPRMAFLQKIEALVKDMQNPETGVRMQNQRVLVTSVPHAMTGGDVLQWIIQRLWISNLEAQNLGNFIVKYGYIYPLQDPKNLVLKPDSSLYRFQTPYFWPTQQWPAEDTDYAIYLAKRNIKKKGILEEYEKENYDFLNKKINYKWDFVIMQAKEQYRTGKERNKADRYALDCQEKAYWLVHRSPPGMNNVLDYGLDRVTNPNEVKKQTVTAVRKEIMYYQQALMRSTVKSSVSLGGIVKYSEQFSSNDAIMSGCLPSNPWITDDTQFWDLNAKLVEVPTKMRVERWAFNFSELIRDPKGRQSFQYFLKKEFSGENLGFWEACEDLKYGDQSKVKEKAEEIYKLFLAPGARRWINIDGKTMDITVKGLRHPHRYVLDAAQTHIYMLMKKDSYARYLKSPIYKEMLAKAIEPQETTKRSSTLPFMRRHLRSSPSPVILRQLEEEERAREAANTVDITQPGQHLAPSPHLAVYTGTCVPPSPSSPFSPSCRSPRKPFPSPSRFIRRPSIAICPSPIRVALEGSSGLEGKGEASWSGANPGPPVTESIETSVDRSRPHSQPRAPLKARAALSLGRFLRRGCLASPVFARLSPKCPSVSHGKVQPLGDMGQQLPRLKPKKVANFFQIKMEMPTDSGPCLMDSDDPGAGESGDQTTEKEVICPWESLAEGKAG.

One can recognise a DEP domain in the interval 30–105; the sequence is PETGVRMQNQ…PDSSLYRFQT (76 aa). The G protein gamma domain occupies 219–280; the sequence is VTAVRKEIMY…ITDDTQFWDL (62 aa). In terms of domain architecture, RGS spans 295 to 416; sequence RWAFNFSELI…SPIYKEMLAK (122 aa). Disordered stretches follow at residues 530 to 571 and 639 to 677; these read SSGL…RAPL and DSGP…GKAG.

As to quaternary structure, heterodimer with GNB5. Interacts with RGS7BP, leading to regulate the subcellular location of the heterodimer formed with GNB5. Component of the RGS9-1-Gbeta5 complex composed of RGS9 (RGS9-1), Gbeta5 (GNB5) and RGS9BP. Interacts with PDE6G and GNAT1. Expressed in the central nervous system. Isoform RGS9L is found in striatum, hypothalamus and nucleus accumbens while isoform RGS9S is expressed in retina and pineal gland.

The protein localises to the membrane. Its function is as follows. Inhibits signal transduction by increasing the GTPase activity of G protein alpha subunits thereby driving them into their inactive GDP-bound form. Binds to GNAT1. Involved in phototransduction; key element in the recovery phase of visual transduction. This is Regulator of G-protein signaling 9 (Rgs9) from Rattus norvegicus (Rat).